Reading from the N-terminus, the 268-residue chain is Hydroxyethylthiazole kinase (268 aa).

M45 contacts substrate. The ATP site is built by R121 and T167. G194 provides a ligand contact to substrate.

This sequence belongs to the Thz kinase family. It depends on Mg(2+) as a cofactor.

It catalyses the reaction 5-(2-hydroxyethyl)-4-methylthiazole + ATP = 4-methyl-5-(2-phosphooxyethyl)-thiazole + ADP + H(+). Its pathway is cofactor biosynthesis; thiamine diphosphate biosynthesis; 4-methyl-5-(2-phosphoethyl)-thiazole from 5-(2-hydroxyethyl)-4-methylthiazole: step 1/1. In terms of biological role, catalyzes the phosphorylation of the hydroxyl group of 4-methyl-5-beta-hydroxyethylthiazole (THZ). In Bacillus cereus (strain ATCC 10987 / NRS 248), this protein is Hydroxyethylthiazole kinase.